A 487-amino-acid polypeptide reads, in one-letter code: Gasdermin-D (487 aa).

Tyr-38 bears the Phosphotyrosine mark. Cys-39, Cys-57, and Cys-77 each carry S-(2-succinyl)cysteine. Transmembrane regions (beta stranded) follow at residues 92–98 and 104–109; these read QGRVMLS and KISGGA. An S-(2-succinyl)cysteine modification is found at Cys-122. 2 beta stranded membrane passes run 181-187 and 192-198; these read GSGQFTL and CLKGEGK. An S-(2-succinyl)cysteine mark is found at Cys-192 and Cys-265. Residue Cys-192 is the site of S-palmitoyl cysteine attachment. A linker helix loop region spans residues 278-298; sequence IDEEELIEAADFQGLYAEVKA. Residues Cys-299, Cys-434, and Cys-487 each carry the S-(2-succinyl)cysteine modification.

Belongs to the gasdermin family. Homooligomer; homooligomeric ring-shaped pore complex containing 27-28 subunits when inserted in the membrane. Homooligomerization is promoted by the mTORC1 complex in macrophages. In response to a canonical inflammasome stimulus, such as nigericin, recruited to NLRP3 inflammasone with similar kinetics to that of uncleaved CASP1 precursor. Although this recruitment is also observed in the absence of PYCARD, it is more efficient in its presence. In terms of processing, cleavage at Asp-276 by CASP1 (mature and uncleaved precursor forms), CASP4/CASP11 or CASP8 relieves autoinhibition and is sufficient to initiate pyroptosis. Cleavage by CASP1 and CASP4/CASP11 is not strictly dependent on the consensus cleavage site on GSDMD but depends on an exosite interface on CASP1 that recognizes and binds the Gasdermin-D, C-terminal (GSDMD-CT) part. Cleavage by CASP8 takes place following inactivation of MAP3K7/TAK1 by Yersinia toxin YopJ. Cleavage at Asp-88 by CASP3 or CASP7 inactivates the ability to mediate pyroptosis, but generates the Gasdermin-D, p13 chain, which translocates to the nucleus and acts as a transcription regulator. Cleavage by papain allergen generates the Gasdermin-D, p40 chain. Palmitoylated at Cys-192 by ZDHHC5 and ZDHHC9 in response to microbial infection and danger signals. May also be palmitoylated by ZDHHC7. Palmitoylation takes place before cleavage by caspases (CASP1, CASP4, CASP5 or CASP8) and is required for membrane translocation and pore formation. Depalmitoylated by LYPLA2. Post-translationally, succination of Cys-192 by the Krebs cycle intermediate fumarate, which leads to S-(2-succinyl)cysteine residues, inhibits processing by caspases, and ability to initiate pyroptosis. Succination modification is catalyzed by a non-enzymatic reaction caused by an accumulation of fumarate. In terms of processing, glycosylated: O-GlcNAcylation by OGT leads to reduced cleavage by CASP4 and decreased LPS-induced endothelial cell pyroptosis. Highly expressed in brain endothelial cells.

It localises to the cytoplasm. The protein resides in the cytosol. The protein localises to the inflammasome. It is found in the cell membrane. Its subcellular location is the secreted. It localises to the mitochondrion membrane. The protein resides in the nucleus. With respect to regulation, the full-length protein before cleavage is inactive: intramolecular interactions between N- and C-terminal domains mediate autoinhibition in the absence of activation signal. The intrinsic pyroptosis-inducing activity is carried by the released N-terminal moiety (Gasdermin-D, N-terminal) following cleavage by inflammatory caspases CASP1, CASP4/CASP11 or CASP8. Cleavage at Asp-88 by CASP3 or CASP7 inactivates the ability to mediate pyroptosis. Pore formation is specifically inhibited by VHH(GSDMD-1) nanobody, protecting against excessive pyroptosis. Inhibited by small molecule NU6300, which covalently reacts with Cys-191, thereby preventing palmitoylation and pyroptosis. Precursor of a pore-forming protein that plays a key role in host defense against pathogen infection and danger signals. This form constitutes the precursor of the pore-forming protein: upon cleavage, the released N-terminal moiety (Gasdermin-D, N-terminal) binds to membranes and forms pores, triggering pyroptosis. Functionally, promotes pyroptosis in response to microbial infection and danger signals. Produced by the cleavage of gasdermin-D by inflammatory caspases CASP1 or CASP4/CASP11 in response to canonical, as well as non-canonical (such as cytosolic LPS) inflammasome activators. After cleavage, moves to the plasma membrane where it strongly binds to inner leaflet lipids, including monophosphorylated phosphatidylinositols, such as phosphatidylinositol 4-phosphate, bisphosphorylated phosphatidylinositols, such as phosphatidylinositol (4,5)-bisphosphate, as well as phosphatidylinositol (3,4,5)-bisphosphate, and more weakly to phosphatidic acid and phosphatidylserine. Homooligomerizes within the membrane and forms pores of 10-15 nanometers (nm) of inner diameter, allowing the release of mature interleukin-1 (IL1B and IL18) and triggering pyroptosis. Gasdermin pores also allow the release of mature caspase-7 (CASP7). In some, but not all, cells types, pyroptosis is followed by pyroptotic cell death, which is caused by downstream activation of ninjurin-1 (NINJ1), which mediates membrane rupture (cytolysis). Also forms pores in the mitochondrial membrane, resulting in release of mitochondrial DNA (mtDNA) into the cytosol. Gasdermin-D, N-terminal released from pyroptotic cells into the extracellular milieu rapidly binds to and kills both Gram-negative and Gram-positive bacteria, without harming neighboring mammalian cells, as it does not disrupt the plasma membrane from the outside due to lipid-binding specificity. Under cell culture conditions, also active against intracellular bacteria, such as Listeria monocytogenes. Also active in response to MAP3K7/TAK1 inactivation by Yersinia toxin YopJ, which triggers cleavage by CASP8 and subsequent activation. Required for mucosal tissue defense against enteric pathogens. Activation of the non-canonical inflammasome in brain endothelial cells can lead to excessive pyroptosis, leading to blood-brain barrier breakdown. Strongly binds to bacterial and mitochondrial lipids, including cardiolipin. Does not bind to unphosphorylated phosphatidylinositol, phosphatidylethanolamine nor phosphatidylcholine. In terms of biological role, transcription coactivator produced by the cleavage by CASP3 or CASP7 in the upper small intestine in response to dietary antigens. Required to maintain food tolerance in small intestine: translocates to the nucleus and acts as a coactivator for STAT1 to induce the transcription of CIITA and MHC class II molecules, which in turn induce type 1 regulatory T (Tr1) cells in upper small intestine. Its function is as follows. Produced by the cleavage by papain allergen. After cleavage, moves to the plasma membrane and homooligomerizes within the membrane and forms pores of 10-15 nanometers (nm) of inner diameter, allowing the specific release of mature interleukin-33 (IL33), promoting type 2 inflammatory immune response. This Mus musculus (Mouse) protein is Gasdermin-D.